The primary structure comprises 460 residues: MTEISSMVISHKKAKIEEMESAWHGDLDGLLNNLYHHEYVYECVVLKTCNRVEIYVVSPKSSSVLFSFAKEMGASTHIIDFYGHDESLEHLLRLAGGLESMIVGEDQILGQIKDLYAYSKKAGTTGKILDTAFEKAIQVGKRIRNETRINKGSVSIGSAAVDLAEDIFGGLTGKSVLVIGAGEIGVLVAKALAEKDIEAIYIANRTFKKAEEIAYELGGYAVRLDDIRGHLPDADVVISGTGAPHYILTREMIEEALDGRERKLLLIDIANPRDIEESVAELENVELCNIDNLRVISERTLKMRKEEAKKAEAIIQEEIRLLNIQYKRQKADRLISELYRQVYDVRVREREKAVNRLSAYHTIGEIETEVLDDLTHSIVNKILAEPTKVLRQAAELGNEEFLDVVSRVFCLEKDKAKLEKINQAKFEQIEPGCAKEQAAVKEQTAVKEQAVVKEQAAVKD.

Residues 48–51 (TCNR), Ser100, 105–107 (EDQ), and Gln111 each bind substrate. Cys49 serves as the catalytic Nucleophile. NADP(+) is bound at residue 180–185 (GAGEIG).

Belongs to the glutamyl-tRNA reductase family. In terms of assembly, homodimer.

It catalyses the reaction (S)-4-amino-5-oxopentanoate + tRNA(Glu) + NADP(+) = L-glutamyl-tRNA(Glu) + NADPH + H(+). It functions in the pathway porphyrin-containing compound metabolism; protoporphyrin-IX biosynthesis; 5-aminolevulinate from L-glutamyl-tRNA(Glu): step 1/2. Functionally, catalyzes the NADPH-dependent reduction of glutamyl-tRNA(Glu) to glutamate 1-semialdehyde (GSA). The polypeptide is Glutamyl-tRNA reductase (Methanosarcina acetivorans (strain ATCC 35395 / DSM 2834 / JCM 12185 / C2A)).